Reading from the N-terminus, the 382-residue chain is 1-deoxy-D-xylulose 5-phosphate reductoisomerase (382 aa).

Residues T10, G11, S12, I13, G36, and N122 each coordinate NADPH. K123 serves as a coordination point for 1-deoxy-D-xylulose 5-phosphate. An NADPH-binding site is contributed by E124. Residue D148 coordinates Mn(2+). Positions 149, 150, 174, and 197 each coordinate 1-deoxy-D-xylulose 5-phosphate. Residue E150 participates in Mn(2+) binding. Position 203 (G203) interacts with NADPH. Positions 210, 215, 216, and 219 each coordinate 1-deoxy-D-xylulose 5-phosphate. E219 serves as a coordination point for Mn(2+).

This sequence belongs to the DXR family. Mg(2+) is required as a cofactor. The cofactor is Mn(2+).

The enzyme catalyses 2-C-methyl-D-erythritol 4-phosphate + NADP(+) = 1-deoxy-D-xylulose 5-phosphate + NADPH + H(+). The protein operates within isoprenoid biosynthesis; isopentenyl diphosphate biosynthesis via DXP pathway; isopentenyl diphosphate from 1-deoxy-D-xylulose 5-phosphate: step 1/6. In terms of biological role, catalyzes the NADPH-dependent rearrangement and reduction of 1-deoxy-D-xylulose-5-phosphate (DXP) to 2-C-methyl-D-erythritol 4-phosphate (MEP). The protein is 1-deoxy-D-xylulose 5-phosphate reductoisomerase of Chlorobium phaeobacteroides (strain BS1).